We begin with the raw amino-acid sequence, 279 residues long: Chromatin modification-related protein EAF5 (279 aa).

A disordered region spans residues 147–179; the sequence is QLQPHANAGKSGSAGTSATITTTTPHMAHSMDP. Over residues 154–170 the composition is skewed to low complexity; the sequence is AGKSGSAGTSATITTTT.

This sequence belongs to the EAF5 family. In terms of assembly, component of the NuA4 histone acetyltransferase complex composed of at least ACT1, ARP4, YAF9, VID21, SWC4, EAF3, EAF5, EAF6, EAF7, EPL1, ESA1, TRA1 and YNG2.

It localises to the nucleus. Its function is as follows. Component of the NuA4 histone acetyltransferase complex which is involved in transcriptional activation of selected genes principally by acetylation of nucleosomal histone H4 and H2A. The NuA4 complex is also involved in DNA repair. This is Chromatin modification-related protein EAF5 (EAF5) from Saccharomyces cerevisiae (strain ATCC 204508 / S288c) (Baker's yeast).